The sequence spans 114 residues: Large ribosomal subunit protein bL20 (114 aa).

This sequence belongs to the bacterial ribosomal protein bL20 family.

Functionally, binds directly to 23S ribosomal RNA and is necessary for the in vitro assembly process of the 50S ribosomal subunit. It is not involved in the protein synthesizing functions of that subunit. This Flavobacterium psychrophilum (strain ATCC 49511 / DSM 21280 / CIP 103535 / JIP02/86) protein is Large ribosomal subunit protein bL20.